A 1925-amino-acid polypeptide reads, in one-letter code: Diacylglycerol kinase eta (1925 aa).

Residues 82-175 (AIIREGYLMK…WLGSLKTATA (94 aa)) form the PH domain. Phorbol-ester/DAG-type zinc fingers lie at residues 195 to 245 (HHHW…IANC) and 268 to 319 (PHQW…PIVC). The 137-residue stretch at 350-486 (GNFSPLLVFV…DRWSIMVFEK (137 aa)) folds into the DAGKc domain. 8 disordered regions span residues 620–641 (EKDNINSKERRNSRSLRSSEKE), 783–805 (ANIDDAGNRLSPSSEAGENTPTE), 847–872 (DKERTASGQVESEKEEADVNEKSEPQ), 1013–1065 (TTLC…NPQQ), 1113–1141 (DRNSGDNHNDNGKNEEADTPTNSAPTRTY), 1167–1234 (NTTT…SSAS), 1256–1276 (IRRHSSHAPSLAVRDYDKDKD), and 1385–1405 (FSAGDKDEKPGKDKERTPTEE). Residues 792–802 (LSPSSEAGENT) show a composition bias toward polar residues. Basic and acidic residues predominate over residues 863 to 872 (ADVNEKSEPQ). The span at 1115 to 1128 (NSGDNHNDNGKNEE) shows a compositional bias: basic and acidic residues. A compositionally biased stretch (low complexity) spans 1167 to 1187 (NTTTSTSSSISTTTTTSTTST). Basic and acidic residues predominate over residues 1386 to 1405 (SAGDKDEKPGKDKERTPTEE). Residues 1862–1925 (WSVNEVVTWL…LQAIKDLSEN (64 aa)) enclose the SAM domain.

The protein belongs to the eukaryotic diacylglycerol kinase family.

It is found in the cytoplasm. It carries out the reaction a 1,2-diacyl-sn-glycerol + ATP = a 1,2-diacyl-sn-glycero-3-phosphate + ADP + H(+). Phosphorylates diacylglycerol (DAG) to generate phosphatidic acid (PA). The sequence is that of Diacylglycerol kinase eta from Drosophila mojavensis (Fruit fly).